A 233-amino-acid polypeptide reads, in one-letter code: Homeobox protein Hox-B6b (233 aa).

The short motif at 136-141 (IYPWMQ) is the Antp-type hexapeptide element. The segment at residues 155–214 (GRRGRQTYTRYQTLELEKEFHFNRYLTRRRRIEISHALCLTERQIKIWFQNRRMKWKKEN) is a DNA-binding region (homeobox). Residues 213–233 (ENKLLNPSKTPEEEEEAEKKS) are disordered. A compositionally biased stretch (acidic residues) spans 224 to 233 (EEEEEAEKKS).

The protein belongs to the Antp homeobox family.

It is found in the nucleus. Sequence-specific transcription factor which is part of a developmental regulatory system that provides cells with specific positional identities on the anterior-posterior axis. This is Homeobox protein Hox-B6b (hoxb6b) from Takifugu rubripes (Japanese pufferfish).